Here is a 392-residue protein sequence, read N- to C-terminus: Galactokinase (392 aa).

Residues R37, E43, H44, and D46 each contribute to the alpha-D-galactose site. The ATP site is built by G136, G138, S140, and S141. D186 provides a ligand contact to alpha-D-galactose. D186 acts as the Proton acceptor in catalysis. S230 bears the Phosphoserine mark. Y236 is an alpha-D-galactose binding site.

The protein belongs to the GHMP kinase family. GalK subfamily. In terms of assembly, homodimer.

The enzyme catalyses alpha-D-galactose + ATP = alpha-D-galactose 1-phosphate + ADP + H(+). Its pathway is carbohydrate metabolism; galactose metabolism. Catalyzes the transfer of a phosphate from ATP to alpha-D-galactose and participates in the first committed step in the catabolism of galactose. The sequence is that of Galactokinase (Galk1) from Mus musculus (Mouse).